The sequence spans 202 residues: Superoxide dismutase [Mn] (202 aa).

His27 contacts Mn(2+). 2 positions are modified to phosphothreonine: Thr34 and Thr70. Residues His82, Asp164, and His168 each contribute to the Mn(2+) site.

Belongs to the iron/manganese superoxide dismutase family. Homodimer. Mn(2+) is required as a cofactor.

It carries out the reaction 2 superoxide + 2 H(+) = H2O2 + O2. In terms of biological role, destroys superoxide anion radicals which are normally produced within the cells and which are toxic to biological systems. This chain is Superoxide dismutase [Mn] (sodA), found in Halalkalibacterium halodurans (strain ATCC BAA-125 / DSM 18197 / FERM 7344 / JCM 9153 / C-125) (Bacillus halodurans).